A 173-amino-acid polypeptide reads, in one-letter code: MAIILGIDPGSRITGYGVIQRAGRQQQYLGSGCIRMQGDALAPRLQQIFDGVSQLILQYKPDMFAIEQVFMAKNPDSALKLGQARGAAIVAASNQGLDVAEYSARQIKQSVVGNGNAQKSQVQHMVTFILKLPGTPQADAADALAVALCHSHTNENLIKMSGQVKKTVRGRLR.

Residues D8, E67, and D139 contribute to the active site. Mg(2+) contacts are provided by D8, E67, and D139.

The protein belongs to the RuvC family. Homodimer which binds Holliday junction (HJ) DNA. The HJ becomes 2-fold symmetrical on binding to RuvC with unstacked arms; it has a different conformation from HJ DNA in complex with RuvA. In the full resolvosome a probable DNA-RuvA(4)-RuvB(12)-RuvC(2) complex forms which resolves the HJ. Requires Mg(2+) as cofactor.

It is found in the cytoplasm. It carries out the reaction Endonucleolytic cleavage at a junction such as a reciprocal single-stranded crossover between two homologous DNA duplexes (Holliday junction).. Its function is as follows. The RuvA-RuvB-RuvC complex processes Holliday junction (HJ) DNA during genetic recombination and DNA repair. Endonuclease that resolves HJ intermediates. Cleaves cruciform DNA by making single-stranded nicks across the HJ at symmetrical positions within the homologous arms, yielding a 5'-phosphate and a 3'-hydroxyl group; requires a central core of homology in the junction. The consensus cleavage sequence is 5'-(A/T)TT(C/G)-3'. Cleavage occurs on the 3'-side of the TT dinucleotide at the point of strand exchange. HJ branch migration catalyzed by RuvA-RuvB allows RuvC to scan DNA until it finds its consensus sequence, where it cleaves and resolves the cruciform DNA. The polypeptide is Crossover junction endodeoxyribonuclease RuvC (Pseudoalteromonas atlantica (strain T6c / ATCC BAA-1087)).